A 607-amino-acid chain; its full sequence is Polypeptide N-acetylgalactosaminyltransferase 18 (607 aa).

Over 1–12 the chain is Cytoplasmic; the sequence is MVCTRKTKTLVS. Residues 13 to 35 form a helical; Signal-anchor for type II membrane protein membrane-spanning segment; the sequence is TCVILSGMTNIICLLYVGWVTNY. Topologically, residues 36–607 are lumenal; the sequence is IASVYVRGQE…ITNVLRSLAS (572 aa). 5 disulfides stabilise this stretch: cysteine 144–cysteine 377, cysteine 368–cysteine 447, cysteine 482–cysteine 498, cysteine 530–cysteine 543, and cysteine 571–cysteine 591. Asparagine 146 carries N-linked (GlcNAc...) asparagine glycosylation. A catalytic subdomain A region spans residues 153–267; it reads LPEVSIVFIF…VGWAEPVLTR (115 aa). A substrate-binding site is contributed by aspartate 194. Asparagine 195 carries an N-linked (GlcNAc...) asparagine glycan. Mn(2+)-binding residues include aspartate 251 and histidine 253. N-linked (GlcNAc...) asparagine glycosylation occurs at asparagine 320. The segment at 324–385 is catalytic subdomain B; the sequence is PIRSPALIGC…PCSRIAHIER (62 aa). Histidine 382 contributes to the Mn(2+) binding site. Positions 385 and 390 each coordinate substrate. Positions 469-599 constitute a Ricin B-type lectin domain; sequence AYGVLQNSLK…KCSGQHWSIT (131 aa).

This sequence belongs to the glycosyltransferase 2 family. GalNAc-T subfamily. Mn(2+) is required as a cofactor.

The protein resides in the golgi apparatus membrane. It carries out the reaction L-seryl-[protein] + UDP-N-acetyl-alpha-D-galactosamine = a 3-O-[N-acetyl-alpha-D-galactosaminyl]-L-seryl-[protein] + UDP + H(+). It catalyses the reaction L-threonyl-[protein] + UDP-N-acetyl-alpha-D-galactosamine = a 3-O-[N-acetyl-alpha-D-galactosaminyl]-L-threonyl-[protein] + UDP + H(+). The protein operates within protein modification; protein glycosylation. Its function is as follows. Catalyzes the initial reaction in O-linked oligosaccharide biosynthesis, the transfer of an N-acetyl-D-galactosamine (GalNAc) residue from UDP-GalNAc to a serine or threonine residue on the protein receptor. In Homo sapiens (Human), this protein is Polypeptide N-acetylgalactosaminyltransferase 18 (GALNT18).